The chain runs to 209 residues: Casparian strip membrane protein 1 (209 aa).

Residues 1-46 (MSSGANATTIDVPETRAEAKGKAPLIAAPIVATTKATPHPNAGWKK) are Cytoplasmic-facing. A helical transmembrane segment spans residues 47 to 67 (GLAIFDFLLRLAAIAATLAAA). Over 68–95 (TTMGTTDETLPFFTQFFQFQASFDDLPA) the chain is Extracellular. Residues 96 to 116 (FMFFVVATAIASGYLALSLPF) form a helical membrane-spanning segment. The Cytoplasmic portion of the chain corresponds to 117–137 (SLVSIFRPHAQGIRLLLIISD). Residues 138 to 158 (TVMLALTTAGAASATAIVYLA) traverse the membrane as a helical segment. Topologically, residues 159-183 (HNGDSSANWIAICQQFTDFCQSVSG) are extracellular. A helical membrane pass occupies residues 184–204 (AVVASFIAVVIFMLLVMMSAL). Residues 205-209 (ALRKH) lie on the Cytoplasmic side of the membrane.

This sequence belongs to the Casparian strip membrane proteins (CASP) family. In terms of assembly, homodimer and heterodimers.

It is found in the cell membrane. Regulates membrane-cell wall junctions and localized cell wall deposition. Required for establishment of the Casparian strip membrane domain (CSD) and the subsequent formation of Casparian strips, a cell wall modification of the root endodermis that determines an apoplastic barrier between the intraorganismal apoplasm and the extraorganismal apoplasm and prevents lateral diffusion. The polypeptide is Casparian strip membrane protein 1 (Vitis vinifera (Grape)).